A 596-amino-acid polypeptide reads, in one-letter code: Zinc finger CCCH domain-containing protein 64 (596 aa).

2 disordered regions span residues 243 to 263 (LSPT…PPKT) and 272 to 291 (DGAA…SQYW). 2 C3H1-type zinc fingers span residues 303 to 331 (SQGE…HNAE) and 335 to 363 (QCRR…HEFQ).

In Arabidopsis thaliana (Mouse-ear cress), this protein is Zinc finger CCCH domain-containing protein 64.